A 103-amino-acid polypeptide reads, in one-letter code: Large ribosomal subunit protein bL25 (103 aa).

The protein belongs to the bacterial ribosomal protein bL25 family. As to quaternary structure, part of the 50S ribosomal subunit; part of the 5S rRNA/L5/L18/L25 subcomplex. Contacts the 5S rRNA. Binds to the 5S rRNA independently of L5 and L18.

Functionally, this is one of the proteins that binds to the 5S RNA in the ribosome where it forms part of the central protuberance. The sequence is that of Large ribosomal subunit protein bL25 from Blochmanniella floridana.